The chain runs to 258 residues: Aquaporin PIP1-2 (258 aa).

The tract at residues 1-37 (MEGKEEDVRLGANKFTERQPIGTAAQSQDKDYKEPPP) is disordered. Topologically, residues 1–55 (MEGKEEDVRLGANKFTERQPIGTAAQSQDKDYKEPPPAPLFEPGELSSWSFYRAG) are cytoplasmic. Residues 56-76 (IAEFVATFLFLYITILTVMGV) traverse the membrane as a helical segment. The Extracellular portion of the chain corresponds to 77 to 89 (VKSSTKCSTVGIQ). Residues 90–110 (GIAWAFGGMIFALVYCTAGIS) traverse the membrane as a helical segment. Topologically, residues 111-133 (GGHINPAVTFGLFLARKLSLTRA) are cytoplasmic. Positions 115–117 (NPA) match the NPA 1 motif. A helical membrane pass occupies residues 134 to 154 (LFYMVMQCLGAICGAGVVKGF). Over 155 to 175 (QKGLYENNGGGANVVAPGYTK) the chain is Extracellular. A helical membrane pass occupies residues 176-196 (GDGLGAEIVGTFILVYTVFSA). Residues 197–209 (TDAKRSARDSHVP) lie on the Cytoplasmic side of the membrane. A helical transmembrane segment spans residues 210 to 230 (ILAPLPIGFAVFLVHLATIPI). The Extracellular segment spans residues 231–258 (TGTGINPARSLGAAIIYNKGHAWDDHWI). The NPA 2 signature appears at 236–238 (NPA).

It belongs to the MIP/aquaporin (TC 1.A.8) family. PIP (TC 1.A.8.11) subfamily. As to expression, barely detectable in roots, leaves and fruits.

Its subcellular location is the cell membrane. Its function is as follows. Water channel required to facilitate the transport of water across cell membrane; mercury-insensitive. Contributes to the tolerance to multiple abiotic stresses including salt (NaCl), cold and water deprivation, by modulating cytosolic K(+)/Na(+) ratio, maintaining osmotic balance, and reducing membrane injury (e.g. oxidative injury). In Musa acuminata (Banana), this protein is Aquaporin PIP1-2.